A 652-amino-acid chain; its full sequence is Zinc finger protein 503 (652 aa).

Residues 1-11 (MSTAPSLSALR) show a composition bias toward polar residues. The interval 1 to 72 (MSTAPSLSAL…HAVPPSDPLR (72 aa)) is disordered. The span at 16–32 (SGGGGGGGGGGGSGGGS) shows a compositional bias: gly residues. A Phosphoserine modification is found at Ser-107. Disordered regions lie at residues 126-283 (SQIG…GVPA) and 296-338 (INVD…SSVL). Low complexity predominate over residues 135 to 144 (PSSKLSSVAS). Composition is skewed to gly residues over residues 145–157 (NGGG…NGAG) and 194–209 (GGGG…GGGV). At Lys-213 the chain carries N6-acetyllysine. Residues 221–230 (ATCQPFTPRT) show a composition bias toward polar residues. The span at 231 to 244 (GSPSSSASACSPGG) shows a compositional bias: low complexity. Residues Ser-235 and Ser-241 each carry the phosphoserine modification. The segment covering 254 to 263 (EGKDDKKDPE) has biased composition (basic and acidic residues). The span at 264 to 283 (AGGGGSSKGSGGASADGVPA) shows a compositional bias: gly residues. Residues 314–336 (GSDCGGSSSSSSGSGPSAPTSSS) show a composition bias toward low complexity. A C2H2-type zinc finger spans residues 520–548 (HICNWVSANGPCDKRFATSEELLSHLRTH). Residue Arg-642 is modified to Omega-N-methylarginine.

This sequence belongs to the Elbow/Noc family.

It localises to the nucleus. Functionally, may function as a transcriptional repressor. The sequence is that of Zinc finger protein 503 (Znf503) from Mus musculus (Mouse).